Consider the following 189-residue polypeptide: Casparian strip membrane protein 1 (189 aa).

Topologically, residues methionine 1 to serine 42 are cytoplasmic. A helical transmembrane segment spans residues isoleucine 43–methionine 63. Over glycine 64–threonine 90 the chain is Extracellular. The chain crosses the membrane as a helical span at residues phenylalanine 91–isoleucine 111. The Cytoplasmic segment spans residues valine 112–aspartate 130. A helical transmembrane segment spans residues threonine 131–alanine 151. At histidine 152–serine 189 the chain is on the extracellular side.

The protein belongs to the Casparian strip membrane proteins (CASP) family. As to quaternary structure, homodimer and heterodimers.

The protein localises to the cell membrane. Its function is as follows. Regulates membrane-cell wall junctions and localized cell wall deposition. Required for establishment of the Casparian strip membrane domain (CSD) and the subsequent formation of Casparian strips, a cell wall modification of the root endodermis that determines an apoplastic barrier between the intraorganismal apoplasm and the extraorganismal apoplasm and prevents lateral diffusion. The polypeptide is Casparian strip membrane protein 1 (Striga asiatica (Asiatic witchweed)).